The primary structure comprises 393 residues: Probable acetyl-CoA acyltransferase (393 aa).

The active-site Acyl-thioester intermediate is cysteine 88. Active-site proton acceptor residues include histidine 349 and cysteine 378.

This sequence belongs to the thiolase-like superfamily. Thiolase family.

The protein resides in the cytoplasm. The catalysed reaction is 2 acetyl-CoA = acetoacetyl-CoA + CoA. The chain is Probable acetyl-CoA acyltransferase from Staphylococcus aureus (strain NCTC 8325 / PS 47).